The sequence spans 215 residues: MSGLRTVSASSGNGKSYDSIMKILLIGDSGVGKSCLLVRFVEDKFNPSFITTIGIDFKIKTVDINGKKVKLQLWDTAGQERFRTITTAYYRGAMGIILVYDVTDERTFTNIKQWFKTVNEHANDEAQLLLVGNKSDMETRVVTADQGEALAKELGIPFIESSAKNDDNVNEIFFTLAKLIQEKIDSNKLVGVGNGKEGNISINSGSGNSSKSNCC.

GTP is bound at residue 27-34; that stretch reads GDSGVGKS. The Effector region motif lies at 49–57; sequence FITTIGIDF. Residues 75–79 and 133–136 contribute to the GTP site; these read DTAGQ and NKSD. Phosphoserine is present on residues serine 201 and serine 204. Residues cysteine 214 and cysteine 215 are each lipidated (S-geranylgeranyl cysteine).

This sequence belongs to the small GTPase superfamily. Rab family. In terms of assembly, interacts with the guanyl-nucleotide exchange factor SEC2. Interacts with SRO7, YIF1, YIP3, YIP4 and YIP5.

The protein resides in the cytoplasmic vesicle. The protein localises to the secretory vesicle membrane. It localises to the cell membrane. It is found in the cytoplasm. Its function is as follows. Involved in exocytosis. Maybe by regulating the binding and fusion of secretory vesicles with the cell surface. The GTP-bound form of SEC4 may interact with an effector, thereby stimulating its activity and leading to exocytotic fusion. SEC4 may be an upstream activator of the 19.5S SEC8/SEC15 particle. SEC4 probably interacts directly with SEC8; it could serve as the attachment site for the SEC8/SEC15 particle. This chain is Ras-related protein SEC4 (SEC4), found in Saccharomyces cerevisiae (strain ATCC 204508 / S288c) (Baker's yeast).